Here is a 97-residue protein sequence, read N- to C-terminus: MAMIKMSPEEIRAKSQSYGQGSDQIRQILSDLTRAQGEIAANWEGQAFSRFEEQFQQLSPKVEKFAQLLEEIKQQLNSTADAVQEQDQQLSNNFGLQ.

Residues Lys-61–Asn-93 are a coiled coil.

It belongs to the WXG100 family. sagEsxA-like subfamily. In terms of assembly, forms both homodimers and heterodimers with EsxC.

The protein localises to the secreted. In terms of biological role, virulence factor that is important for the establishment of infection in the host. EsxA is required for EsxB synthesis as well as secretion. Modulates host cell apoptotic pathways and mediates together with EsxB the release of S.aureus from the host cell. By acting on apoptosis, plays a role in the modulation of dendritic cell-mediated immunity. The protein is Type VII secretion system extracellular protein A of Staphylococcus aureus (strain USA300).